We begin with the raw amino-acid sequence, 895 residues long: Plasma membrane ATPase 1 (895 aa).

The interval 1–53 is disordered; sequence MSATEPTNEKVDKIVSDDEDEDIDQLVADLQSNPGAGDEEEEEENDSSFKAVP. Residues 1 to 92 lie on the Cytoplasmic side of the membrane; that stretch reads MSATEPTNEK…AEEQENLVLK (92 aa). Basic and acidic residues predominate over residues 7-16; that stretch reads TNEKVDKIVS. A compositionally biased stretch (acidic residues) spans 37–46; that stretch reads GDEEEEEEND. The helical transmembrane segment at 93–113 threads the bilayer; sequence FVMFFVGPIQFVMEAAAVLAA. At 114-117 the chain is on the extracellular side; sequence GLED. Residues 118–137 traverse the membrane as a helical segment; the sequence is WVDFGVICALLLLNAFVGFI. Residues 138–268 are Cytoplasmic-facing; the sequence is QEYQAGSIVD…GTGHFTEVLN (131 aa). Residues 269 to 290 traverse the membrane as a helical segment; it reads GIGTTLLVFVIVTLLVVWVACF. The Extracellular segment spans residues 291–301; the sequence is YRTVRIVPILR. The helical transmembrane segment at 302-324 threads the bilayer; sequence YTLAITIIGVPVGLPAVVTTTMA. The Cytoplasmic segment spans residues 325 to 696; the sequence is VGAAYLAKKQ…IAILNRSLDI (372 aa). Aspartate 355 (4-aspartylphosphate intermediate) is an active-site residue. The Mg(2+) site is built by aspartate 611 and aspartate 615. A helical membrane pass occupies residues 697-715; that stretch reads NLIVFIAIFADVATLAIAY. The Extracellular portion of the chain corresponds to 716 to 731; sequence DNAPYDPKPVKWNLPR. Residues 732–751 form a helical membrane-spanning segment; the sequence is LWGMSIVLGIILAIGTWITL. Residues 752–801 are Cytoplasmic-facing; the sequence is TTMLLPKGGIIQNFGGLDGILFLQISLTENWLIFVTRAQGPFWSSIPSWQ. A helical membrane pass occupies residues 802 to 822; it reads LSGAVLIVDIIATCFTLFGWW. Residues 823–834 are Extracellular-facing; it reads SQNWTDIVTVVR. A helical transmembrane segment spans residues 835–851; that stretch reads TWIWSFGVFCVMGGAYY. Topologically, residues 852-895 are cytoplasmic; that stretch reads LMSTSEAFDNFCNGRKPQQHTDKRSLEDFLVSMQRVSTQHEKST.

Belongs to the cation transport ATPase (P-type) (TC 3.A.3) family. Type IIIA subfamily.

The protein localises to the cell membrane. It catalyses the reaction ATP + H2O + H(+)(in) = ADP + phosphate + 2 H(+)(out). Functionally, the plasma membrane ATPase of plants and fungi is a hydrogen ion pump. The proton gradient it generates drives the active transport of nutrients by H(+)-symport. The resulting external acidification and/or internal alkinization may mediate growth responses. In Candida albicans (Yeast), this protein is Plasma membrane ATPase 1 (PMA1).